The sequence spans 343 residues: Endoglucanase C (343 aa).

Catalysis depends on E140, which acts as the Proton donor. E280 (nucleophile) is an active-site residue.

It belongs to the glycosyl hydrolase 5 (cellulase A) family.

The enzyme catalyses Endohydrolysis of (1-&gt;4)-beta-D-glucosidic linkages in cellulose, lichenin and cereal beta-D-glucans.. The protein operates within glycan metabolism; cellulose degradation. In terms of biological role, this enzyme catalyzes the endohydrolysis of 1,4-beta-glucosidic linkages in cellulose, lichenin and cereal beta-D-glucans. This is Endoglucanase C (celC) from Acetivibrio thermocellus (Hungateiclostridium thermocellum).